The following is a 286-amino-acid chain: NADPH-dependent 7-cyano-7-deazaguanine reductase (286 aa).

92–94 (IES) provides a ligand contact to substrate. An NADPH-binding site is contributed by 94-95 (SK). Cysteine 194 (thioimide intermediate) is an active-site residue. Aspartate 201 (proton donor) is an active-site residue. 233–234 (HE) provides a ligand contact to substrate. 262-263 (RG) serves as a coordination point for NADPH.

It belongs to the GTP cyclohydrolase I family. QueF type 2 subfamily. Homodimer.

It localises to the cytoplasm. It carries out the reaction 7-aminomethyl-7-carbaguanine + 2 NADP(+) = 7-cyano-7-deazaguanine + 2 NADPH + 3 H(+). It participates in tRNA modification; tRNA-queuosine biosynthesis. Catalyzes the NADPH-dependent reduction of 7-cyano-7-deazaguanine (preQ0) to 7-aminomethyl-7-deazaguanine (preQ1). The protein is NADPH-dependent 7-cyano-7-deazaguanine reductase of Shewanella sp. (strain MR-4).